We begin with the raw amino-acid sequence, 191 residues long: Apoptosis regulator BHRF1 (191 aa).

The segment at 1 to 18 is interaction with host VRK2; that stretch reads MAYSTREILLALCIRDSR. The N-linked (GlcNAc...) asparagine; by host glycan is linked to Asn-22. A BH1 motif is present at residues 89–109; it reads EIFHRGDPSLGRALAWMAWCM. Positions 89–142 are interaction with host VRK2; it reads EIFHRGDPSLGRALAWMAWCMHACRTLCCNQSTPYYVVDLSVRGMLEASEGLDG. An N-linked (GlcNAc...) asparagine; by host glycan is attached at Asn-118. A BH2 motif is present at residues 142–157; the sequence is GWIHQQGGWSTLIEDN. A helical membrane pass occupies residues 166-186; that stretch reads WTLFLAGLTLSLLVICSYLFI.

The protein belongs to the Bcl-2 family. Interacts with isoform 1 of host VRK2; this interaction is involved in protecting cells from apoptosis. Interacts with host PRA1; this interaction seems to modulate BHRF1 anti-apoptotic activity. Interacts with host BCL2L11. Interacts with host BAD and BBC3. Interacts with BALF1; BALF1 acting as a negative regulator of the survival function of BHRF1. Interacts with host BECN1.

Its subcellular location is the host membrane. The protein localises to the host mitochondrion. In terms of biological role, prevents premature death of the host cell during virus production, which would otherwise reduce the amount of progeny virus. Acts as a host B-cell leukemia/lymphoma 2 (Bcl-2) homolog, and interacts with pro-apoptotic proteins to prevent mitochondria permeabilization, release of cytochrome c and subsequent apoptosis of the host cell. In addition, plays a role in the inhibiton of host BECN1-mediated starvation-induced autophagy without affecting basal levels of autophagy. The sequence is that of Apoptosis regulator BHRF1 from Homo sapiens (Human).